Reading from the N-terminus, the 218-residue chain is Octanoyltransferase (218 aa).

In terms of domain architecture, BPL/LPL catalytic spans 31–206 (REAADEVWLV…QLVKHLDYAE (176 aa)). Substrate-binding positions include 70–77 (RGGQVTYH), 137–139 (SLG), and 150–152 (GLA). The active-site Acyl-thioester intermediate is cysteine 168.

Belongs to the LipB family.

The protein resides in the cytoplasm. It carries out the reaction octanoyl-[ACP] + L-lysyl-[protein] = N(6)-octanoyl-L-lysyl-[protein] + holo-[ACP] + H(+). The protein operates within protein modification; protein lipoylation via endogenous pathway; protein N(6)-(lipoyl)lysine from octanoyl-[acyl-carrier-protein]: step 1/2. Catalyzes the transfer of endogenously produced octanoic acid from octanoyl-acyl-carrier-protein onto the lipoyl domains of lipoate-dependent enzymes. Lipoyl-ACP can also act as a substrate although octanoyl-ACP is likely to be the physiological substrate. The chain is Octanoyltransferase from Pseudomonas savastanoi pv. phaseolicola (strain 1448A / Race 6) (Pseudomonas syringae pv. phaseolicola (strain 1448A / Race 6)).